We begin with the raw amino-acid sequence, 409 residues long: Tyrosine--tRNA ligase (409 aa).

Residues Pro54–His63 carry the 'HIGH' region motif. Positions Lys238–Ser242 match the 'KMSKS' region motif. Lys241 serves as a coordination point for ATP. One can recognise an S4 RNA-binding domain in the interval Met347–Leu407.

It belongs to the class-I aminoacyl-tRNA synthetase family. TyrS type 2 subfamily. In terms of assembly, homodimer.

Its subcellular location is the cytoplasm. It catalyses the reaction tRNA(Tyr) + L-tyrosine + ATP = L-tyrosyl-tRNA(Tyr) + AMP + diphosphate + H(+). In terms of biological role, catalyzes the attachment of tyrosine to tRNA(Tyr) in a two-step reaction: tyrosine is first activated by ATP to form Tyr-AMP and then transferred to the acceptor end of tRNA(Tyr). The chain is Tyrosine--tRNA ligase from Bordetella avium (strain 197N).